A 489-amino-acid chain; its full sequence is Glucose-6-phosphate isomerase (489 aa).

The active-site Proton donor is the Glu309. Active-site residues include His340 and Lys459.

It belongs to the GPI family.

The protein localises to the cytoplasm. It catalyses the reaction alpha-D-glucose 6-phosphate = beta-D-fructose 6-phosphate. Its pathway is carbohydrate biosynthesis; gluconeogenesis. The protein operates within carbohydrate degradation; glycolysis; D-glyceraldehyde 3-phosphate and glycerone phosphate from D-glucose: step 2/4. Catalyzes the reversible isomerization of glucose-6-phosphate to fructose-6-phosphate. The chain is Glucose-6-phosphate isomerase from Idiomarina loihiensis (strain ATCC BAA-735 / DSM 15497 / L2-TR).